The sequence spans 363 residues: Phosphoserine aminotransferase (363 aa).

Arg42 contributes to the L-glutamate binding site. Pyridoxal 5'-phosphate is bound by residues 76–77, Trp102, Thr156, Asp175, and Gln198; that span reads GR. Lys199 is modified (N6-(pyridoxal phosphate)lysine). 240–241 serves as a coordination point for pyridoxal 5'-phosphate; it reads NT.

This sequence belongs to the class-V pyridoxal-phosphate-dependent aminotransferase family. SerC subfamily. In terms of assembly, homodimer. Pyridoxal 5'-phosphate serves as cofactor.

It is found in the cytoplasm. The catalysed reaction is O-phospho-L-serine + 2-oxoglutarate = 3-phosphooxypyruvate + L-glutamate. The enzyme catalyses 4-(phosphooxy)-L-threonine + 2-oxoglutarate = (R)-3-hydroxy-2-oxo-4-phosphooxybutanoate + L-glutamate. Its pathway is amino-acid biosynthesis; L-serine biosynthesis; L-serine from 3-phospho-D-glycerate: step 2/3. The protein operates within cofactor biosynthesis; pyridoxine 5'-phosphate biosynthesis; pyridoxine 5'-phosphate from D-erythrose 4-phosphate: step 3/5. Functionally, catalyzes the reversible conversion of 3-phosphohydroxypyruvate to phosphoserine and of 3-hydroxy-2-oxo-4-phosphonooxybutanoate to phosphohydroxythreonine. This is Phosphoserine aminotransferase from Shewanella baltica (strain OS195).